The following is a 561-amino-acid chain: DNA ligase B (561 aa).

Residue K125 is the N6-AMP-lysine intermediate of the active site.

This sequence belongs to the NAD-dependent DNA ligase family. LigB subfamily.

It catalyses the reaction NAD(+) + (deoxyribonucleotide)n-3'-hydroxyl + 5'-phospho-(deoxyribonucleotide)m = (deoxyribonucleotide)n+m + AMP + beta-nicotinamide D-nucleotide.. In terms of biological role, catalyzes the formation of phosphodiester linkages between 5'-phosphoryl and 3'-hydroxyl groups in double-stranded DNA using NAD as a coenzyme and as the energy source for the reaction. The sequence is that of DNA ligase B from Salmonella paratyphi B (strain ATCC BAA-1250 / SPB7).